The primary structure comprises 256 residues: (E)-benzylidenesuccinyl-CoA hydratase (256 aa).

Catalysis depends on E110, which acts as the Nucleophile. E130 (proton acceptor) is an active-site residue.

This sequence belongs to the enoyl-CoA hydratase/isomerase family. As to quaternary structure, homotrimer.

It catalyses the reaction (2S)-[(R)-hydroxy(phenyl)methyl]succinyl-CoA = (E)-2-benzylidenesuccinyl-CoA + H2O. The protein operates within xenobiotic degradation; toluene degradation. Functionally, involved in an anaerobic toluene degradation pathway. Catalyzes the hydration of (E)-2-benzylidenesuccinyl-CoA to the corresponding alcohol intermediate, 2-(alpha-hydroxybenzyl)succinyl-CoA. Also accepts the N-acetylcysteamine (NAC) thioester of (E)-benzylidenesuccinate. The chain is (E)-benzylidenesuccinyl-CoA hydratase from Thauera aromatica.